Consider the following 518-residue polypeptide: Ell-associated factor Eaf (518 aa).

Composition is skewed to polar residues over residues Lys-119–Pro-128 and Glu-163–Asn-182. Disordered regions lie at residues Lys-119 to His-216 and Ala-241 to Asp-518. The residue at position 192 (Ser-192) is a Phosphoserine. Polar residues-rich tracts occupy residues Ala-253 to Gly-265 and Met-274 to Gly-284. The segment covering Gln-289–Gln-342 has biased composition (low complexity). Residues Arg-343–Met-355 show a composition bias toward polar residues. A compositionally biased stretch (low complexity) spans Ala-368–Ala-377. Positions Glu-397–Glu-412 are enriched in acidic residues. Composition is skewed to low complexity over residues His-418–Ser-428, Gln-463–Gln-476, and Asn-500–Asp-518.

It belongs to the EAF family.

The protein resides in the nucleus. Functionally, promotes transcriptional elongation by Su(Tpl)/ELL. Essential for development. The protein is Ell-associated factor Eaf of Drosophila mojavensis (Fruit fly).